Consider the following 51-residue polypeptide: Large ribosomal subunit protein eL39 (51 aa).

This sequence belongs to the eukaryotic ribosomal protein eL39 family.

This is Large ribosomal subunit protein eL39 (RpL39) from Drosophila melanogaster (Fruit fly).